The chain runs to 325 residues: tRNA pseudouridine synthase B (325 aa).

D49 serves as the catalytic Nucleophile.

It belongs to the pseudouridine synthase TruB family. Type 1 subfamily.

The catalysed reaction is uridine(55) in tRNA = pseudouridine(55) in tRNA. Its function is as follows. Responsible for synthesis of pseudouridine from uracil-55 in the psi GC loop of transfer RNAs. The sequence is that of tRNA pseudouridine synthase B from Mesorhizobium japonicum (strain LMG 29417 / CECT 9101 / MAFF 303099) (Mesorhizobium loti (strain MAFF 303099)).